The primary structure comprises 393 residues: Probable acetyl-CoA acyltransferase (393 aa).

Catalysis depends on cysteine 88, which acts as the Acyl-thioester intermediate. Active-site proton acceptor residues include histidine 349 and cysteine 378.

The protein belongs to the thiolase-like superfamily. Thiolase family.

The protein resides in the cytoplasm. It carries out the reaction 2 acetyl-CoA = acetoacetyl-CoA + CoA. The protein is Probable acetyl-CoA acyltransferase of Staphylococcus aureus (strain bovine RF122 / ET3-1).